Here is a 285-residue protein sequence, read N- to C-terminus: HTH-type transcriptional regulator MurR (285 aa).

The HTH rpiR-type domain maps to 1 to 77 (MLYLTKIRNA…MALIGEYSAS (77 aa)). Residues 37–56 (SRKMAKLLGISQSSIVKFAQ) constitute a DNA-binding region (H-T-H motif). Positions 128–268 (IIEAISKAPF…FVGLVQLNDV (141 aa)) constitute an SIS domain.

In terms of assembly, homotetramer.

The protein operates within amino-sugar metabolism; N-acetylmuramate degradation [regulation]. Its function is as follows. Represses the expression of the murPQ operon involved in the uptake and degradation of N-acetylmuramic acid (MurNAc). Binds to two adjacent inverted repeats within the operator region. MurNAc 6-phosphate, the substrate of MurQ, is the specific inducer that weakens binding of MurR to the operator. The sequence is that of HTH-type transcriptional regulator MurR from Escherichia coli O17:K52:H18 (strain UMN026 / ExPEC).